The primary structure comprises 211 residues: Interleukin-6 (211 aa).

The N-terminal stretch at 1–24 (MKFLSARDFHPVAFLGLMLVTTTA) is a signal peptide. Cystine bridges form between cysteine 70-cysteine 76 and cysteine 99-cysteine 109.

This sequence belongs to the IL-6 superfamily. As to quaternary structure, component of a hexamer of two molecules each of IL6, IL6R and IL6ST; first binds to IL6R to associate with the signaling subunit IL6ST. Interacts with IL6R (via the N-terminal ectodomain); this interaction may be affected by IL6R-binding with SORL1, hence decreasing IL6 cis signaling. Interacts with SORL1 (via the N-terminal ectodomain); this interaction leads to IL6 internalization and lysosomal degradation. May form a trimeric complex with the soluble SORL1 ectodomain and soluble IL6R receptor; this interaction might stabilize circulating IL6, hence promoting IL6 trans signaling. N- and O-glycosylated. In terms of tissue distribution, expressed by dendritic cells and macrophages. Expressed by activated follicular B cells. Abundantly expressed in the central nervous system (CNS), particularly the hypothalamic region.

It is found in the secreted. Its function is as follows. Cytokine with a wide variety of biological functions in immunity, tissue regeneration, and metabolism. Binds to IL6R, then the complex associates to the signaling subunit IL6ST/gp130 to trigger the intracellular IL6-signaling pathway. The interaction with the membrane-bound IL6R and IL6ST stimulates 'classic signaling', whereas the binding of IL6 and soluble IL6R to IL6ST stimulates 'trans-signaling'. Alternatively, 'cluster signaling' occurs when membrane-bound IL6:IL6R complexes on transmitter cells activate IL6ST receptors on neighboring receiver cells. Functionally, IL6 is a potent inducer of the acute phase response. Rapid production of IL6 contributes to host defense during infection and tissue injury, but excessive IL6 synthesis is involved in disease pathology. In the innate immune response, is synthesized by myeloid cells, such as macrophages and dendritic cells, upon recognition of pathogens through toll-like receptors (TLRs) at the site of infection or tissue injury. In the adaptive immune response, is required for the differentiation of B-cells into immunoglolin-secreting cells. Plays a major role in the differentiation of CD4(+) T cell subsets. Essential factor for the development of T follicular helper (Tfh) cells that are required for the induction of germinal-center formation. Together with IL21, controls the early generation of Tfh cells and are critical for an effective antibody response to acute viral infection. Required to drive naive CD4(+) T cells to the Th17 lineage, through 'cluster signaling' by dendritic cells. Also required for proliferation of myeloma cells and the survival of plasmablast cells. Acts as an essential factor in bone homeostasis and on vessels directly or indirectly by induction of VEGF, resulting in increased angiogenesis activity and vascular permeability. Induces, through 'trans-signaling' and synergistically with IL1B and TNF, the production of VEGF. Involved in metabolic controls, is discharged into the bloodstream after muscle contraction increasing lipolysis and improving insulin resistance. 'Trans-signaling' in central nervous system regulates energy and glucose homeostasis. Mediates, through GLP-1, crosstalk between insulin-sensitive tissues, intestinal L cells and pancreatic islets to adapt to changes in insulin demand. Also acts as a myokine. Plays a protective role during liver injury, being required for maintenance of tissue regeneration. Also has a pivotal role in iron metabolism by regulating HAMP/hepcidin expression upon inflammation or bacterial infection. Through activation of IL6ST-YAP-NOTCH pathway, induces inflammation-induced epithelial regeneration. The chain is Interleukin-6 from Mus musculus (Mouse).